The chain runs to 1310 residues: Contactin-associated protein-like 4 (1310 aa).

A signal peptide spans 1–27 (MNMGSVAGAVLKMLLLLSTQNWNRVEA). The Extracellular segment spans residues 28 to 1243 (GNSYDCDEPL…LTHAIKSDSA (1216 aa)). Residues 33 to 179 (CDEPLVSALP…IGMRIEVFGC (147 aa)) enclose the F5/8 type C domain. Cysteine 33 and cysteine 179 are oxidised to a cystine. The Laminin G-like 1 domain occupies 214–346 (FKTMESDGIL…NLFYNGVDVI (133 aa)). N-linked (GlcNAc...) asparagine glycans are attached at residues asparagine 262, asparagine 287, and asparagine 361. Disulfide bonds link cysteine 334-cysteine 366, cysteine 517-cysteine 549, cysteine 555-cysteine 566, and cysteine 560-cysteine 575. In terms of domain architecture, Laminin G-like 2 spans 400–529 (FRTWNKAGLL…LISINNKMVD (130 aa)). Asparagine 540 carries N-linked (GlcNAc...) asparagine glycosylation. The EGF-like 1 domain maps to 551–588 (ISDRCLPNSCEHGGECSQSWSTFHCNCTNTGYTGATCH). The N-linked (GlcNAc...) asparagine glycan is linked to asparagine 576. Cysteine 577 and cysteine 587 are oxidised to a cystine. The Fibrinogen C-terminal domain maps to 589-794 (SSVYEQSCEA…LLCRGDRPFW (206 aa)). Residues asparagine 604, asparagine 627, asparagine 639, asparagine 708, and asparagine 750 are each glycosylated (N-linked (GlcNAc...) asparagine). In terms of domain architecture, Laminin G-like 3 spans 795 to 960 (NAASFNTEAS…TVTPGVQPGC (166 aa)). Intrachain disulfides connect cysteine 933–cysteine 960, cysteine 964–cysteine 977, cysteine 971–cysteine 986, and cysteine 988–cysteine 998. In terms of domain architecture, EGF-like 2 spans 960–999 (CRGHCGSYGKLCRHGGKCREKPSGFFCDCSSSAYAGPFCS). Residues asparagine 1019, asparagine 1025, and asparagine 1075 are each glycosylated (N-linked (GlcNAc...) asparagine). The 157-residue stretch at 1048-1204 (FRTTRAPSLL…VTGHVTESSC (157 aa)) folds into the Laminin G-like 4 domain. A disulfide bridge connects residues cysteine 1169 and cysteine 1204. Residues 1244-1264 (VIGGLIAVVIFILLCVSAIAV) traverse the membrane as a helical segment. Residues 1265 to 1310 (RIYQQKRLYKRNEAKRSENVDSAEAVLKSELHIQNAVGENQKEYFF) lie on the Cytoplasmic side of the membrane.

Belongs to the neurexin family. As to quaternary structure, interacts with TIAM1. In terms of tissue distribution, specifically present in developing cortical interneurons: highly expressed in cortical parvalbumin (PV) cells and midbrain dopaminergic neurons and is localized presynaptically (at protein level). Also present in the substantia nigra pars compacta (SnC) and ventral tegmental area (VTA) midbrain dopaminergic projection populations.

It localises to the presynaptic cell membrane. In terms of biological role, presynaptic protein involved in both dopaminergic synaptic transmission and GABAergic system, thereby participating in the structural maturation of inhibitory interneuron synapses. Involved in the dopaminergic synaptic transmission by attenuating dopamine release through a presynaptic mechanism. Also participates in the GABAergic system. The chain is Contactin-associated protein-like 4 (Cntnap4) from Mus musculus (Mouse).